Here is a 66-residue protein sequence, read N- to C-terminus: Large ribosomal subunit protein bL33c (66 aa).

This sequence belongs to the bacterial ribosomal protein bL33 family.

Its subcellular location is the plastid. It localises to the chloroplast. This chain is Large ribosomal subunit protein bL33c, found in Cycas taitungensis (Prince sago).